The chain runs to 210 residues: Calaxin (210 aa).

3 consecutive EF-hand domains span residues 64–99 (TDDM…FLRG), 100–135 (TLDE…SLIR), and 145–180 (GIKD…ENLL). Asp-77, Asp-79, Asp-81, Tyr-83, Glu-88, Asp-113, Asn-115, Asp-117, Tyr-119, Glu-124, Asp-158, Asp-160, Asp-162, Arg-164, and Asp-169 together coordinate Ca(2+).

Component of the outer dynein arm-docking complex along with ODAD1, ODAD2, ODAD3 and ODAD4.

The protein localises to the cytoplasm. It is found in the cytoskeleton. Its subcellular location is the cilium axoneme. It localises to the cell projection. The protein resides in the cilium. The protein localises to the flagellum. Its function is as follows. Component of the outer dynein arm-docking complex (ODA-DC) that mediates outer dynein arms (ODA) binding onto the doublet microtubule. Seems to regulate the assembly of both ODAs and their axonemal docking complex onto ciliary microtubules. Regulates ciliary and flagellar motility and is required for cilia-driven determination of body laterality. In terms of biological role, regulates ciliary motility and is required for cilia-driven determination of body laterality. The sequence is that of Calaxin (clxn) from Danio rerio (Zebrafish).